The chain runs to 603 residues: HAUS augmin-like complex subunit 3 (603 aa).

Ser2 carries the N-acetylserine modification. Coiled coils occupy residues 93-177 (RLDD…TQLM), 305-336 (VDKE…DRSL), 389-426 (LSYE…LEML), and 458-495 (ENKK…SAQE).

It belongs to the HAUS3 family. Component of the HAUS augmin-like complex. The complex interacts with the gamma-tubulin ring complex and this interaction is required for spindle assembly. Interacts with EML3 (phosphorylated at 'Thr-881').

It localises to the cytoplasm. The protein resides in the cytoskeleton. Its subcellular location is the microtubule organizing center. The protein localises to the centrosome. It is found in the spindle. Contributes to mitotic spindle assembly, maintenance of centrosome integrity and completion of cytokinesis as part of the HAUS augmin-like complex. The sequence is that of HAUS augmin-like complex subunit 3 (HAUS3) from Homo sapiens (Human).